A 162-amino-acid polypeptide reads, in one-letter code: Calcium vector protein (162 aa).

Alanine 2 is modified (N-acetylalanine). 4 consecutive EF-hand domains span residues 12–47 (EEKD…LGQT), 49–84 (TKRE…KWVR), 86–121 (DDEE…VGEE), and 123–158 (LTDA…SKNA). Lysine 96 is modified (N6,N6,N6-trimethyllysine). Ca(2+) contacts are provided by aspartate 99, asparagine 101, aspartate 103, and glutamate 110. Position 117 is an N6,N6,N6-trimethyllysine (lysine 117). Residues aspartate 136, aspartate 138, asparagine 140, and glutamate 147 each coordinate Ca(2+).

The protein resides in the cytoplasm. In terms of biological role, the exact function of this protein is not yet known. It interacts with CAVPT, a protein also of unknown function, in a calcium-dependent way. This protein binds two calcium ions. This chain is Calcium vector protein, found in Branchiostoma lanceolatum (Common lancelet).